A 77-amino-acid chain; its full sequence is Sec-independent protein translocase protein TatA (77 aa).

The helical transmembrane segment at 1 to 21 threads the bilayer; that stretch reads MGSFSIWHWLIVLVIVMLVFG. The segment at 46–77 is disordered; sequence GEGKAAADPAQSKELRDSTTIDVEAKEKTRQQ.

Belongs to the TatA/E family. As to quaternary structure, the Tat system comprises two distinct complexes: a TatABC complex, containing multiple copies of TatA, TatB and TatC subunits, and a separate TatA complex, containing only TatA subunits. Substrates initially bind to the TatABC complex, which probably triggers association of the separate TatA complex to form the active translocon.

The protein localises to the cell inner membrane. Part of the twin-arginine translocation (Tat) system that transports large folded proteins containing a characteristic twin-arginine motif in their signal peptide across membranes. TatA could form the protein-conducting channel of the Tat system. The polypeptide is Sec-independent protein translocase protein TatA (Cupriavidus necator (strain ATCC 17699 / DSM 428 / KCTC 22496 / NCIMB 10442 / H16 / Stanier 337) (Ralstonia eutropha)).